A 96-amino-acid chain; its full sequence is Co-chaperonin GroES (96 aa).

It belongs to the GroES chaperonin family. Heptamer of 7 subunits arranged in a ring. Interacts with the chaperonin GroEL.

It is found in the cytoplasm. In terms of biological role, together with the chaperonin GroEL, plays an essential role in assisting protein folding. The GroEL-GroES system forms a nano-cage that allows encapsulation of the non-native substrate proteins and provides a physical environment optimized to promote and accelerate protein folding. GroES binds to the apical surface of the GroEL ring, thereby capping the opening of the GroEL channel. In Syntrophomonas wolfei subsp. wolfei (strain DSM 2245B / Goettingen), this protein is Co-chaperonin GroES.